The sequence spans 315 residues: Putative olfactory receptor 2I1 (315 aa).

The Extracellular portion of the chain corresponds to 1–24 (MKANYSAEERFLLLGFSDWPSLQP). The helical transmembrane segment at 25–48 (VLFALVLLCYLLTLTGNSALVLLA) threads the bilayer. Topologically, residues 49 to 56 (VRDPRLHT) are cytoplasmic. Residues 57–78 (PMYYFLCHLALVDAGFTTSVVP) form a helical membrane-spanning segment. The Extracellular portion of the chain corresponds to 79–99 (PLLANLRGPALWLPRSHCTAQ). The cysteines at positions 96 and 188 are disulfide-linked. The helical transmembrane segment at 100–119 (LCASLALGSAECVLLAVMAL) threads the bilayer. Over 120 to 138 (DRAAAVCRPLRYAGLVSPR) the chain is Cytoplasmic. Residues 139–157 (LCRTLASASWLSGLTNSVA) traverse the membrane as a helical segment. At 158 to 195 (QTALLAERPLCAPRLLDHFICELPALLKLACGGDGDTT) the chain is on the extracellular side. A helical membrane pass occupies residues 196-219 (ENQMFAARVVILLLPFAVILASYG). Over 220–236 (AVARAVCCMRFSGGRRR) the chain is Cytoplasmic. A helical membrane pass occupies residues 237–259 (AVGTCGSHLTAVCLFYGSAIYTY). Residues 260–272 (LQPAQRYNQARGK) lie on the Extracellular side of the membrane. Residues 273–292 (FVSLFYTVVTPALNPLIYTL) form a helical membrane-spanning segment. At 293–315 (RNKKVKGAARRLLRSLGRGQAGQ) the chain is on the cytoplasmic side.

This sequence belongs to the G-protein coupled receptor 1 family.

The protein localises to the cell membrane. Functionally, odorant receptor. The sequence is that of Putative olfactory receptor 2I1 from Homo sapiens (Human).